The primary structure comprises 241 residues: Beta-nerve growth factor (241 aa).

Positions 1-18 (MSMLFYTLITAFLIGVQA) are cleaved as a signal peptide. Positions 19 to 121 (EPYTDSNVPE…SFNRTHRSKR (103 aa)) are excised as a propeptide. Asn-69, Asn-114, and Asn-166 each carry an N-linked (GlcNAc...) asparagine glycan. 3 disulfide bridges follow: Cys-136–Cys-201, Cys-179–Cys-229, and Cys-189–Cys-231. The a 1-acyl-sn-glycero-3-phospho-(1D-myo-inositol) site is built by Tyr-173 and Lys-209. Lys-209 lines the a 1-acyl-sn-glycero-3-phospho-L-serine pocket.

The protein belongs to the NGF-beta family. In terms of assembly, homodimer. The homodimer interacts with a single NTRK1 chain. The homodimer interacts with a single NGFR chain. The NGF dimer interacts with a single SORCS2 chain (via extracellular domain). The NGF precursor (proNGF) binds to a receptor complex formed by SORT1 and NGFR, which leads to NGF endocytosis. Both mature NGF and the immature NGF precursor (proNGF) interact with SORCS2 and with the heterodimer formed by SORCS2 and NGFR (via extracellular domains). The NGF precursor (proNGF) has much higher affinity for SORCS2 than mature NGF. The NGF precursor (proNGF) has much higher affinity for SORT1 than mature NGF. Interacts with ADAM10 in a divalent cation-dependent manner. Interacts with SORCS3. In terms of tissue distribution, detected in the granule and pyramidal cell layer in the hippocampus.

Its subcellular location is the secreted. It is found in the endosome lumen. Its function is as follows. Nerve growth factor is important for the development and maintenance of the sympathetic and sensory nervous systems. Extracellular ligand for the NTRK1 and NGFR receptors, activates cellular signaling cascades to regulate neuronal proliferation, differentiation and survival. The immature NGF precursor (proNGF) functions as a ligand for the heterodimeric receptor formed by SORCS2 and NGFR, and activates cellular signaling cascades that lead to inactivation of RAC1 and/or RAC2, reorganization of the actin cytoskeleton and neuronal growth cone collapse. In contrast to mature NGF, the precursor form (proNGF) promotes neuronal apoptosis (in vitro). Inhibits metalloproteinase-dependent proteolysis of platelet glycoprotein VI. Binds lysophosphatidylinositol and lysophosphatidylserine between the two chains of the homodimer. The lipid-bound form promotes histamine relase from mast cells, contrary to the lipid-free form. The polypeptide is Beta-nerve growth factor (Ngf) (Rattus norvegicus (Rat)).